A 609-amino-acid polypeptide reads, in one-letter code: Mitogen-activated protein kinase kinase kinase 3 (609 aa).

A disordered region spans residues methionine 1–glycine 202. Positions lysine 11 to lysine 28 are enriched in basic and acidic residues. 2 stretches are compositionally biased toward low complexity: residues proline 40–serine 64 and valine 90–serine 108. The Protein kinase domain occupies tryptophan 214 to leucine 470. Residues leucine 220 to valine 228 and lysine 243 each bind ATP. Residue aspartate 339 is the Proton acceptor of the active site. Disordered regions lie at residues proline 487 to asparagine 511 and methionine 590 to valine 609. Polar residues predominate over residues serine 594–valine 609.

This sequence belongs to the protein kinase superfamily. STE Ser/Thr protein kinase family. MAP kinase kinase kinase subfamily. As to quaternary structure, interacts with PBL27. As to expression, expressed in flower buds, roots, leaves, seedlings, stems and immature siliques. Absent of mature pollen.

It carries out the reaction L-seryl-[protein] + ATP = O-phospho-L-seryl-[protein] + ADP + H(+). The catalysed reaction is L-threonyl-[protein] + ATP = O-phospho-L-threonyl-[protein] + ADP + H(+). In Arabidopsis thaliana (Mouse-ear cress), this protein is Mitogen-activated protein kinase kinase kinase 3.